We begin with the raw amino-acid sequence, 217 residues long: Small ribosomal subunit protein uS3c (217 aa).

The KH type-2 domain maps to 39 to 109 (IRNFLRTKLI…RFRITITYIP (71 aa)).

The protein belongs to the universal ribosomal protein uS3 family. As to quaternary structure, part of the 30S ribosomal subunit.

It is found in the plastid. The protein localises to the chloroplast. The polypeptide is Small ribosomal subunit protein uS3c (rps3) (Chlorokybus atmophyticus (Soil alga)).